A 314-amino-acid polypeptide reads, in one-letter code: MLGNYSSATEFFLLGFPGSQEVCRILFATFFLLYAVTVMGNVVIIITVCVDKCLQSPIYFFLGHLCVLEILITSTAVPFMLWGLLLPSTQIMSLTACAAQLYLYLSLGTLELALMGVMAVDRYVAVCNPLRYNIIMNSSTFIWVIIVSWVLGFLSEIWPVYATFQLTFCKSSVLDHFYCDRGQLLKVSCEDTLFREFILFLMAVFIIIGSLIPTIVSYTYIISTNLKIPSASGWRKSFSTCASHFTYVVIGYGSCLFLYVKPKQTQAAEYNRVVSLLVLVVTPFLNPFIFTLRNDKFIQAFGDGMKHCYKLLKN.

The Extracellular portion of the chain corresponds to Met-1–Arg-24. Residue Asn-4 is glycosylated (N-linked (GlcNAc...) asparagine). The helical transmembrane segment at Ile-25 to Ile-45 threads the bilayer. Over Ile-46 to His-64 the chain is Cytoplasmic. Residues Leu-65 to Leu-85 traverse the membrane as a helical segment. Topologically, residues Leu-86 to Ala-99 are extracellular. The cysteines at positions 97 and 179 are disulfide-linked. A helical transmembrane segment spans residues Gln-100–Val-120. Topologically, residues Asp-121 to Thr-140 are cytoplasmic. The helical transmembrane segment at Phe-141–Tyr-161 threads the bilayer. The Extracellular segment spans residues Ala-162 to Glu-196. A helical membrane pass occupies residues Phe-197 to Ser-217. Residues Tyr-218–Ser-239 lie on the Cytoplasmic side of the membrane. A helical membrane pass occupies residues Thr-240–Val-260. Topologically, residues Lys-261–Asn-271 are extracellular. The chain crosses the membrane as a helical span at residues Arg-272 to Leu-292. At Arg-293–Asn-314 the chain is on the cytoplasmic side.

This sequence belongs to the G-protein coupled receptor 1 family.

The protein resides in the cell membrane. Functionally, odorant receptor. This Homo sapiens (Human) protein is Olfactory receptor 9A1 (OR9A1P).